A 419-amino-acid chain; its full sequence is Inner ear-specific collagen (419 aa).

Positions 1 to 19 are cleaved as a signal peptide; that stretch reads MDAYSLSPTDSTTYSSDTF. Residues 20 to 57 are nonhelical region (NC2); sequence STEFHTDAIAPPGNTPGNYTLDYNECFFNFCECCPPEK. Asparagine 37 carries an N-linked (GlcNAc...) asparagine glycan. The tract at residues 58–274 is triple-helical region (COL1); sequence GPMGPMGERG…RGPKGPPGES (217 aa). Residues 63–275 are disordered; sequence MGERGLPGPP…GPKGPPGESV (213 aa). Basic and acidic residues-rich tracts occupy residues 129–144 and 184–202; these read PGEK…KGER and LKGE…KGER. A compositionally biased stretch (gly residues) spans 227–236; the sequence is GPLGGKGDTG. In terms of domain architecture, C1q spans 275–412; the sequence is VEQIRSAFSV…GFLLYPDTKK (138 aa). The nonhelical region (NC1) stretch occupies residues 275-419; it reads VEQIRSAFSV…TKKPTAMENL (145 aa). A glycan (N-linked (GlcNAc...) asparagine) is linked at asparagine 320.

As to expression, specialized secretory supporting cells at the outer perimeter of the saccular epithelium.

Its subcellular location is the secreted. It localises to the extracellular space. It is found in the extracellular matrix. Forms a microstructural matrix within the otolithic membrane. The protein is Inner ear-specific collagen of Lepomis macrochirus (Bluegill).